The primary structure comprises 448 residues: Divalent metal cation transporter MntH (448 aa).

11 helical membrane-spanning segments follow: residues 41–61 (LFAF…PGNW), 69–89 (SEFG…AVLL), 117–137 (GFVL…AEVI), 147–167 (FGIP…LVLF), 176–196 (IEVI…AEMV), 215–235 (IVTN…TVMP), 270–290 (FSLT…AAAF), 307–327 (LLNP…ALLA), 363–383 (VLAI…GINE), 384–404 (LLIF…IPLV), and 424–444 (IISW…LFYT).

The protein belongs to the NRAMP family.

The protein localises to the cell membrane. Its function is as follows. H(+)-stimulated, divalent metal cation uptake system. This Listeria welshimeri serovar 6b (strain ATCC 35897 / DSM 20650 / CCUG 15529 / CIP 8149 / NCTC 11857 / SLCC 5334 / V8) protein is Divalent metal cation transporter MntH.